We begin with the raw amino-acid sequence, 69 residues long: Ubiquitin-ribosomal protein eL40 fusion protein (69 aa).

The Ubiquitin-like domain occupies 1-17 (NIQKESTLHLVLRLRGG). Lys4 is covalently cross-linked (Glycyl lysine isopeptide (Lys-Gly) (interchain with G-Cter in ubiquitin)). Residue Gly17 forms a Glycyl lysine isopeptide (Gly-Lys) (interchain with K-? in acceptor proteins) linkage. Lys39 bears the N6,N6,N6-trimethyllysine mark.

It in the N-terminal section; belongs to the ubiquitin family. In the C-terminal section; belongs to the eukaryotic ribosomal protein eL40 family. As to quaternary structure, part of the 60S ribosomal subunit. In terms of processing, trimethylation of Lys-39 ('Lys-22' of the mature chain) by SMYD5 promotes translation elongation and protein synthesis.

The protein resides in the cytoplasm. The protein localises to the nucleus. In terms of biological role, exists either covalently attached to another protein, or free (unanchored). When covalently bound, it is conjugated to target proteins via an isopeptide bond either as a monomer (monoubiquitin), a polymer linked via different Lys residues of the ubiquitin (polyubiquitin chains) or a linear polymer linked via the initiator Met of the ubiquitin (linear polyubiquitin chains). Polyubiquitin chains, when attached to a target protein, have different functions depending on the Lys residue of the ubiquitin that is linked: Lys-6-linked may be involved in DNA repair; Lys-11-linked is involved in ERAD (endoplasmic reticulum-associated degradation) and in cell-cycle regulation; Lys-29-linked is involved in proteotoxic stress response and cell cycle; Lys-33-linked is involved in kinase modification; Lys-48-linked is involved in protein degradation via the proteasome; Lys-63-linked is involved in endocytosis, DNA-damage responses as well as in signaling processes leading to activation of the transcription factor NF-kappa-B. Linear polymer chains formed via attachment by the initiator Met lead to cell signaling. Ubiquitin is usually conjugated to Lys residues of target proteins, however, in rare cases, conjugation to Cys or Ser residues has been observed. When polyubiquitin is free (unanchored-polyubiquitin), it also has distinct roles, such as in activation of protein kinases, and in signaling. Its function is as follows. Component of the 60S subunit of the ribosome. The polypeptide is Ubiquitin-ribosomal protein eL40 fusion protein (UBA52) (Gallus gallus (Chicken)).